Reading from the N-terminus, the 394-residue chain is Flavohemoprotein (394 aa).

In terms of domain architecture, Globin spans 1 to 138 (MLTQEHINII…LAQVFIDREG (138 aa)). Heme b is bound at residue His85. Active-site charge relay system residues include Tyr95 and Glu137. The reductase stretch occupies residues 149–394 (GGWRDGRTFV…VFGPHAQLAA (246 aa)). The FAD-binding FR-type domain occupies 152-262 (RDGRTFVVRE…YAPAGDFFYV (111 aa)). Residues Tyr190 and 206-209 (RQYS) each bind FAD. Residue 274–279 (GVGATP) participates in NADP(+) binding. 385-388 (VFGP) is an FAD binding site.

The protein belongs to the globin family. Two-domain flavohemoproteins subfamily. In the C-terminal section; belongs to the flavoprotein pyridine nucleotide cytochrome reductase family. Heme b is required as a cofactor. FAD serves as cofactor.

The enzyme catalyses 2 nitric oxide + NADPH + 2 O2 = 2 nitrate + NADP(+) + H(+). It carries out the reaction 2 nitric oxide + NADH + 2 O2 = 2 nitrate + NAD(+) + H(+). Its function is as follows. Is involved in NO detoxification in an aerobic process, termed nitric oxide dioxygenase (NOD) reaction that utilizes O(2) and NAD(P)H to convert NO to nitrate, which protects the bacterium from various noxious nitrogen compounds. Therefore, plays a central role in the inducible response to nitrosative stress. This Vibrio cholerae serotype O1 (strain ATCC 39315 / El Tor Inaba N16961) protein is Flavohemoprotein (hmp).